The following is a 139-amino-acid chain: Ribonuclease P/MRP protein subunit POP5 (139 aa).

The protein belongs to the eukaryotic/archaeal RNase P protein component 2 family.

The protein localises to the nucleus. The enzyme catalyses Endonucleolytic cleavage of RNA, removing 5'-extranucleotides from tRNA precursor.. Component of ribonuclease P, a protein complex that generates mature tRNA molecules by cleaving their 5'-ends. Also a component of RNase MRP, which cleaves pre-rRNA sequences. This chain is Ribonuclease P/MRP protein subunit POP5, found in Schizosaccharomyces pombe (strain 972 / ATCC 24843) (Fission yeast).